A 445-amino-acid polypeptide reads, in one-letter code: tRNA modification GTPase MnmE (445 aa).

The (6S)-5-formyl-5,6,7,8-tetrahydrofolate site is built by Arg20, Glu79, and Lys119. Residues 215–371 (GLKLAIIGPP…ILKNIEEIAE (157 aa)) form the TrmE-type G domain. Residue Asn225 participates in K(+) binding. Residues 225-230 (NAGKSS), 244-250 (SNIAGTT), and 269-272 (DTAG) contribute to the GTP site. Ser229 provides a ligand contact to Mg(2+). K(+) is bound by residues Ser244, Ile246, and Thr249. Thr250 serves as a coordination point for Mg(2+). Lys445 is a (6S)-5-formyl-5,6,7,8-tetrahydrofolate binding site.

Belongs to the TRAFAC class TrmE-Era-EngA-EngB-Septin-like GTPase superfamily. TrmE GTPase family. In terms of assembly, homodimer. Heterotetramer of two MnmE and two MnmG subunits. The cofactor is K(+).

It localises to the cytoplasm. Its function is as follows. Exhibits a very high intrinsic GTPase hydrolysis rate. Involved in the addition of a carboxymethylaminomethyl (cmnm) group at the wobble position (U34) of certain tRNAs, forming tRNA-cmnm(5)s(2)U34. In Rickettsia bellii (strain OSU 85-389), this protein is tRNA modification GTPase MnmE.